The chain runs to 356 residues: Dihydroorotate dehydrogenase (quinone) (356 aa).

Residues 66-70 (AGFDK) and Thr-90 contribute to the FMN site. Lys-70 is a binding site for substrate. Substrate is bound at residue 115–119 (NRMGF). Residues Asn-143 and Asn-176 each coordinate FMN. Position 176 (Asn-176) interacts with substrate. Ser-179 (nucleophile) is an active-site residue. Asn-181 lines the substrate pocket. FMN is bound by residues Lys-212 and Thr-240. 241–242 (NT) provides a ligand contact to substrate. FMN-binding positions include Gly-264, Gly-293, and 314–315 (YT).

It belongs to the dihydroorotate dehydrogenase family. Type 2 subfamily. As to quaternary structure, monomer. FMN is required as a cofactor.

The protein localises to the cell membrane. It carries out the reaction (S)-dihydroorotate + a quinone = orotate + a quinol. It functions in the pathway pyrimidine metabolism; UMP biosynthesis via de novo pathway; orotate from (S)-dihydroorotate (quinone route): step 1/1. Catalyzes the conversion of dihydroorotate to orotate with quinone as electron acceptor. In Mycobacterium leprae (strain TN), this protein is Dihydroorotate dehydrogenase (quinone) (pyrD).